Here is a 462-residue protein sequence, read N- to C-terminus: uncharacterized protein (462 aa).

WD repeat units lie at residues 170–209 (GGER…EVQL), 212–260 (GHTD…PLLR), 263–302 (GHLA…ELLM), 305–344 (GHSE…SIMV), 347–386 (EHIR…LAHT), 389–430 (AHSS…LIKS), and 433–462 (GHEE…LWYP).

It localises to the cytoplasm. This is an uncharacterized protein from Schizosaccharomyces pombe (strain 972 / ATCC 24843) (Fission yeast).